We begin with the raw amino-acid sequence, 630 residues long: Sodium-dependent serotonin transporter (630 aa).

Residues 1-87 (METTPLNSQK…ERETWGKKVD (87 aa)) are Cytoplasmic-facing. The disordered stretch occupies residues 31 to 59 (VPTPGDKVESGQISNGYSAVPSPGAGDDT). Tyrosine 47 carries the post-translational modification Phosphotyrosine. Residues 88-112 (FLLSVIGYAVDLGNVWRFPYICYQN) form a helical membrane-spanning segment. 5 residues coordinate Na(+): glycine 94, alanine 96, valine 97, aspartate 98, and asparagine 101. Position 98 (aspartate 98) interacts with serotonin. Topologically, residues 113-115 (GGG) are extracellular. The chain crosses the membrane as a helical span at residues 116 to 135 (AFLIPYTIMAIFGGIPLFYM). The Cytoplasmic segment spans residues 136 to 160 (ELALGQYHRNGCISIWRKICPIFKG). At tyrosine 142 the chain carries Phosphotyrosine. Residues 161-186 (IGYAICIIAFYIASYYNTIMAWALYY) form a helical membrane-spanning segment. Residues 187-252 (LISSFTDQLP…KGLQDLGGIS (66 aa)) lie on the Extracellular side of the membrane. An intrachain disulfide couples cysteine 200 to cysteine 209. N-linked (GlcNAc...) asparagine glycans are attached at residues asparagine 208 and asparagine 217. The helical transmembrane segment at 253-271 (WQLALCIMLIFTVIYFSIW) threads the bilayer. Residues 272–277 (KGVKTS) are Cytoplasmic-facing. Threonine 276 is modified (phosphothreonine). A helical transmembrane segment spans residues 278 to 297 (GKVVWVTATFPYIILSVLLV). Topologically, residues 298–324 (RGATLPGAWRGVLFYLKPNWQKLLETG) are extracellular. A helical transmembrane segment spans residues 325-347 (VWIDAAAQIFFSLGPGFGVLLAF). Serine 336 contributes to the Na(+) binding site. Residues 348 to 360 (ASYNKFNNNCYQD) lie on the Cytoplasmic side of the membrane. The chain crosses the membrane as a helical span at residues 361–380 (ALVTSVVNCMTSFVSGFVIF). Residue asparagine 368 participates in Na(+) binding. The Extracellular segment spans residues 381–421 (TVLGYMAEMRNEDVSEVAKDAGPSLLFITYAEAIANMPAST). The chain crosses the membrane as a helical span at residues 422–443 (FFAIIFFLMLITLGLDSTFAGL). Na(+)-binding residues include leucine 434, aspartate 437, and serine 438. Threonine 439 is a binding site for serotonin. Over 444-463 (EGVITAVLDEFPHIWAKRRE) the chain is Cytoplasmic. A helical transmembrane segment spans residues 464–483 (WFVLAVVITCFFGSLVTLTF). Residues 484 to 494 (GGAYVVKLLEE) are Extracellular-facing. 2 residues coordinate serotonin: glutamate 494 and tyrosine 495. The helical transmembrane segment at 495–516 (YATGPAVLTVALIEAVAVSWFY) threads the bilayer. The Cytoplasmic portion of the chain corresponds to 517 to 538 (GITQFCRDVKEMLGFSPGWFWR). Residues 539–558 (ICWVAISPLFLLFIICSFLM) traverse the membrane as a helical segment. Phenylalanine 556 and serine 559 together coordinate serotonin. At 559 to 574 (SPPQLRLFQYNYPHWS) the chain is on the extracellular side. Residues 575-595 (IILGYCIGTSSFVCIPTYIAY) traverse the membrane as a helical segment. The Cytoplasmic portion of the chain corresponds to 596-630 (RLISTPGTFKERIIKSITPETPTEIPCGDVRLNAV). An interaction with RAB4A region spans residues 616 to 624 (TPTEIPCGD).

This sequence belongs to the sodium:neurotransmitter symporter (SNF) (TC 2.A.22) family. SLC6A4 subfamily. Monomer or homooligomer. Interacts (via C-terminus) with SCAMP2; the interaction is direct and retains transporter molecules intracellularly. Interacts with filamentous actin and STX1A. Interacts (via the N-terminus) with STX1A (via the H3 domain); this interaction regulates SLC4A6 channel conductance. Interacts with SEC23A, SEC24C and PATJ. Interacts with NOS1; the interaction may diminish the cell surface localization of SERT in the brain and, correspondingly, reduce serotonin reuptake. Interacts with TGFB1I1. Interacts with ITGAV:ITGB3. Interacts (via C-terminus) with ITGB3; this interaction regulates SLC6A4 trafficking. Post-translationally, phosphorylation at Thr-276 increases 5-HT uptake and is required for cGMP-mediated SERT regulation.

Its subcellular location is the cell membrane. It localises to the endomembrane system. The protein localises to the endosome membrane. It is found in the synapse. The protein resides in the cell junction. Its subcellular location is the focal adhesion. It localises to the cell projection. The protein localises to the neuron projection. It carries out the reaction serotonin(out) + K(+)(in) + Na(+)(out) + H(+)(in) = serotonin(in) + K(+)(out) + Na(+)(in) + H(+)(out). Serotonin transporter that cotransports serotonin with one Na(+) ion in exchange for one K(+) ion and possibly one proton in an overall electroneutral transport cycle. Transports serotonin across the plasma membrane from the extracellular compartment to the cytosol thus limiting serotonin intercellular signaling. Essential for serotonin homeostasis in the central nervous system. In the developing somatosensory cortex, acts in glutamatergic neurons to control serotonin uptake and its trophic functions accounting for proper spatial organization of cortical neurons and elaboration of sensory circuits. In the mature cortex, acts primarily in brainstem raphe neurons to mediate serotonin uptake from the synaptic cleft back into the pre-synaptic terminal thus terminating serotonin signaling at the synapse. Modulates mucosal serotonin levels in the gastrointestinal tract through uptake and clearance of serotonin in enterocytes. Required for enteric neurogenesis and gastrointestinal reflexes. Regulates blood serotonin levels by ensuring rapid high affinity uptake of serotonin from plasma to platelets, where it is further stored in dense granules via vesicular monoamine transporters and then released upon stimulation. Mechanistically, the transport cycle starts with an outward-open conformation having Na1(+) and Cl(-) sites occupied. The binding of a second extracellular Na2(+) ion and serotonin substrate leads to structural changes to outward-occluded to inward-occluded to inward-open, where the Na2(+) ion and serotonin are released into the cytosol. Binding of intracellular K(+) ion induces conformational transitions to inward-occluded to outward-open and completes the cycle by releasing K(+) possibly together with a proton bound to Asp-98 into the extracellular compartment. Na1(+) and Cl(-) ions remain bound throughout the transport cycle. Additionally, displays serotonin-induced channel-like conductance for monovalent cations, mainly Na(+) ions. The channel activity is uncoupled from the transport cycle and may contribute to the membrane resting potential or excitability. The polypeptide is Sodium-dependent serotonin transporter (SLC6A4) (Macaca mulatta (Rhesus macaque)).